A 438-amino-acid polypeptide reads, in one-letter code: Flotillin-2 (438 aa).

The protein belongs to the band 7/mec-2 family. Flotillin subfamily. In terms of assembly, heterooligomeric complex of flotillins 1 and 2.

The protein resides in the membrane. Functionally, may play a role in axon growth and regeneration. May be involved in epidermal cell adhesion and epidermal structure and function. The chain is Flotillin-2 from Drosophila melanogaster (Fruit fly).